Consider the following 747-residue polypeptide: MLGKGGVGGGGGTKAPKPSFVSYVRPEEIHTDEKEVTEKEVTLHLLPGEQLLCEASTVLKYVQEDSCQRGVYGRLVCTDFKISFLGDEDSALDNGGEAQFKNKIIGVNDVPLHCVDQIYGVFDEKKKPLFGQLKKYPEKLVIHCKDLRVLHFCLRYTKEEEVKRIVSGIIHHTQSPKLLKRLFLFSYAAAVHGTATDSRNCTVMFDTPKDWCWELERTKGSVKYRTVSVNEGYRVSDRLPAYFVVPTPLPEDDVRRFQGHGIPIWCWSCHNGSALLKMSALPKEQDDGALQVQKSFLDGIYKTIHRPPYEMVKTEDLSSNFLSLQEIQSAYCKFKQLFLIDNSSEFWDTDIKWFSLLESSSWLDIIRRCLKKAIEITECLEAQNVNVLLLEENASDLCCLLSSLVQVMMDAHCRTRTGFQSLIQKEWVMGGHSFLDRCNHLHQSDKEEVPIFLLFLDCVWQLVHQYPPAFEFTETYLTVLSDSLYIPIFSTFFFNSPHQKDTNMGRENLDAQSKPLTLLTVWDWSVQFEPKAQTLLRNPLYVEKPKLDRGQQKGSRFKHQRQLSLPLTQSKSSPKRGFFREETDHLIKNLLGKRISKLINSSDDLQDSSREFYDSWHSKPTDYHGLLLPHIEGPEIKVWAQRYLRWIPEAQILGGGRVATMGKLLEMMEEVQSLQEKIEARHHRQEAVHAEAPGLLRNSVRLSSLFPFALLQRHSAKPVLPTSGWKALGGEDDLAKREDEFVDLGDV.

Residues Phe-205–Tyr-643 enclose the Myotubularin phosphatase domain. The interval Val-449–Lys-558 is interaction with MTM1. Residues Asp-548 to Lys-575 form a disordered region. Polar residues predominate over residues Gln-562–Ser-572. Residues Ser-564 and Ser-601 each carry the phosphoserine modification.

This sequence belongs to the protein-tyrosine phosphatase family. Non-receptor class myotubularin subfamily. As to quaternary structure, heterodimer with lipid phosphatase MTM1. Heterodimer with lipid phosphatase MTMR2. As to expression, expressed in skeletal muscles (at protein level).

It is found in the cytoplasm. The protein localises to the sarcoplasmic reticulum. The protein resides in the myofibril. Its subcellular location is the sarcomere. In terms of biological role, acts as an adapter for the myotubularin-related phosphatases. Regulates phosphatase MTM1 protein stability and possibly its intracellular location. By stabilizing MTM1 protein levels, required for skeletal muscle maintenance but not for myogenesis. This Mus musculus (Mouse) protein is Myotubularin-related protein 12 (Mtmr12).